The following is a 138-amino-acid chain: Acidic phospholipase A2 5 (138 aa).

The first 16 residues, 1 to 16 (MRTLWIVAVWLIGVEG), serve as a signal peptide directing secretion. 7 cysteine pairs are disulfide-bonded: cysteine 42-cysteine 131, cysteine 44-cysteine 60, cysteine 59-cysteine 111, cysteine 65-cysteine 138, cysteine 66-cysteine 104, cysteine 73-cysteine 97, and cysteine 91-cysteine 102. Residues tyrosine 43, glycine 45, and glycine 47 each coordinate Ca(2+). Histidine 63 is a catalytic residue. Aspartate 64 contacts Ca(2+). Aspartate 105 is a catalytic residue.

This sequence belongs to the phospholipase A2 family. Group II subfamily. D49 sub-subfamily. Requires Ca(2+) as cofactor. In terms of tissue distribution, expressed by the venom gland.

It is found in the secreted. It carries out the reaction a 1,2-diacyl-sn-glycero-3-phosphocholine + H2O = a 1-acyl-sn-glycero-3-phosphocholine + a fatty acid + H(+). Its function is as follows. PLA2 catalyzes the calcium-dependent hydrolysis of the 2-acyl groups in 3-sn-phosphoglycerides. The protein is Acidic phospholipase A2 5 of Echis ocellatus (Ocellated saw-scaled viper).